We begin with the raw amino-acid sequence, 382 residues long: Cell division protein DivIB (382 aa).

The Cytoplasmic segment spans residues 1–103 (MAKDKEKQSD…SATQIAFQKS (103 aa)). Composition is skewed to basic and acidic residues over residues 36 to 49 (EKKL…DKKA) and 60 to 70 (VELKTDEKTDS). The segment at 36-92 (EKKLKEKLLSDKKAQQQAQNASEAVELKTDEKTDSQEIESETTSKPKKTKKVRQPKE) is disordered. Residues 104 to 124 (LPVLLGALLLMAVSIFMITPY) form a helical membrane-spanning segment. Positions 125-196 (SKKKEFSVRG…NHFLFNVIEF (72 aa)) constitute a POTRA domain. The Extracellular segment spans residues 125-382 (SKKKEFSVRG…PETVLEQAHG (258 aa)). A disordered region spans residues 322-382 (QEIENQPEVP…PETVLEQAHG (61 aa)). The span at 338-352 (AADKEGDKPGEHQEQ) shows a compositional bias: basic and acidic residues.

This sequence belongs to the FtsQ/DivIB family. DivIB subfamily.

It localises to the cell membrane. Functionally, cell division protein that may be involved in stabilizing or promoting the assembly of the division complex. This chain is Cell division protein DivIB, found in Streptococcus pyogenes serotype M2 (strain MGAS10270).